The chain runs to 169 residues: Putative 3-methyladenine DNA glycosylase (169 aa).

Belongs to the DNA glycosylase MPG family.

This is Putative 3-methyladenine DNA glycosylase from Wolbachia sp. subsp. Brugia malayi (strain TRS).